An 873-amino-acid polypeptide reads, in one-letter code: Sine oculis-binding protein homolog (873 aa).

A compositionally biased stretch (basic and acidic residues) spans 1–14 (MAEMEKEGRPPENK). The segment at 1–26 (MAEMEKEGRPPENKRSRKPAHPVKRE) is disordered. FCS-type zinc fingers lie at residues 142-180 (DDVS…KCFA) and 216-256 (FKNN…KCLN). Disordered regions lie at residues 308–339 (RRKA…DTAN), 413–484 (RGPP…PGAP), and 550–646 (KPPN…PGVL). The segment covering 318–339 (AGQSQGPGPSASTTVSPSDTAN) has biased composition (polar residues). Low complexity predominate over residues 417-433 (HHASNPNSPLSNPMLPG). Over residues 460–484 (IHPPSTPTMPGNPPGLLPPPPPGAP) the composition is skewed to pro residues. Residues 614–625 (EHGRSEVVDLTR) are compositionally biased toward basic and acidic residues. Residues 620–624 (VVDLT) carry the SUMO interaction motif 1 (SIM); mediates the binding to polysumoylated substrates motif. Phosphoserine is present on Ser629. Residues 653–657 (VIDLT) carry the SUMO interaction motif 2 (SIM); mediates the binding to polysumoylated substrates motif. Lys677 is covalently cross-linked (Glycyl lysine isopeptide (Lys-Gly) (interchain with G-Cter in SUMO2)). The residue at position 699 (Ser699) is a Phosphoserine. The disordered stretch occupies residues 730–771 (AAAEGAKSAEPPPEQPPPPPPPAPPKKLLSPEEPAVSELESV). The segment covering 739 to 754 (EPPPEQPPPPPPPAPP) has biased composition (pro residues).

The protein belongs to the SOBP family. Interacts (via SIM domains) with SUMO1 and SUMO2.

Functionally, implicated in development of the cochlea. This is Sine oculis-binding protein homolog from Homo sapiens (Human).